A 198-amino-acid chain; its full sequence is DnaJ homolog subfamily C member 5 (198 aa).

Phosphoserine is present on residues S8, S10, S12, and S15. Positions 13-82 (GESLYHVLGL…RNIYDKYGSL (70 aa)) constitute a J domain. Position 17 is a phosphotyrosine (Y17). K56 bears the N6-acetyllysine mark. S151 carries the phosphoserine modification.

As to quaternary structure, oligomers. Homodimer. Interacts with the chaperone complex consisting of HSC70 and SGTA. Interacts with ZDHHC13 (via ANK repeats). Interacts with ZDHHC17 (via ANK repeats). Interacts with SYT1, SYT5 and SYT7, and with SYT9, forming a complex with SNAP25. Post-translationally, ser-10 phosphorylation induces an order-to-disorder transition triggering the interaction with Lys-58. This conformational switch modulates DNAJC5's cellular functions by reducing binding to syntaxin and synaptogamin without altering HSC70 interactions. Palmitoylated. Could be palmitoylated by DHHC3, DHHC7, DHHC15 and DHHC17. Palmitoylation occurs probably in the cysteine-rich domain and regulates DNAJC5 membrane attachment. Expressed in pancreas, kidney, skeletal muscle, liver, lung, placenta, brain and heart.

The protein localises to the cytoplasm. It localises to the cytosol. It is found in the membrane. Its subcellular location is the cytoplasmic vesicle. The protein resides in the secretory vesicle. The protein localises to the chromaffin granule membrane. It localises to the melanosome. It is found in the cell membrane. Its function is as follows. Acts as a general chaperone in regulated exocytosis. Acts as a co-chaperone for the SNARE protein SNAP-25. Involved in the calcium-mediated control of a late stage of exocytosis. May have an important role in presynaptic function. May be involved in calcium-dependent neurotransmitter release at nerve endings. The polypeptide is DnaJ homolog subfamily C member 5 (Homo sapiens (Human)).